The sequence spans 145 residues: Large ribosomal subunit protein uL15 (145 aa).

Residues 1–55 are disordered; it reads MSLLKTLAPKAGSKHAPKRIGRGIGSGMGGTATKGHKGQLARTGGTVRRGFEGGQ. The span at 12-21 shows a compositional bias: basic residues; it reads GSKHAPKRIG. Over residues 22-32 the composition is skewed to gly residues; that stretch reads RGIGSGMGGTA.

This sequence belongs to the universal ribosomal protein uL15 family. In terms of assembly, part of the 50S ribosomal subunit.

Binds to the 23S rRNA. This Bdellovibrio bacteriovorus (strain ATCC 15356 / DSM 50701 / NCIMB 9529 / HD100) protein is Large ribosomal subunit protein uL15.